A 360-amino-acid polypeptide reads, in one-letter code: Leukotriene B4 receptor 2 (360 aa).

The Extracellular portion of the chain corresponds to 1 to 24 (MSVCYRPPGNETLLSWKGSRATGT). An N-linked (GlcNAc...) asparagine glycan is attached at Asn10. Residues 25-45 (AFLLLAALLGLPGNGFVVWSL) traverse the membrane as a helical segment. Residues 46 to 60 (AGWRPTAGRPLAATL) are Cytoplasmic-facing. A helical membrane pass occupies residues 61-81 (VLHLALADGAVLLLTPLFVAF). Topologically, residues 82 to 96 (LSQEAWPLGQVGCKA) are extracellular. The chain crosses the membrane as a helical span at residues 97–117 (VYYVCALSMYASVLLTGLLSL). Residues 118 to 140 (QRCLAVTRPFLAPRLRSPALARR) lie on the Cytoplasmic side of the membrane. Residues 141–161 (LLLGVWLAALVLAVPAAVYRH) traverse the membrane as a helical segment. At 162-185 (LWGGRVCQLCHPSPVHAAAHLSLE) the chain is on the extracellular side. A helical membrane pass occupies residues 186-206 (TLTAFVLPFGTVLGCYGVTLA). Topologically, residues 207–224 (RLRGARWGSGRQGTRVGR) are cytoplasmic. Residues 225–245 (LVSAIVLAFGLLWAPYHAVNL) traverse the membrane as a helical segment. Residues 246-275 (LQAVAALAPPEGPLARLGGAGQAARAGTTA) are Extracellular-facing. Residues 276–296 (LAFFSSSVNPVLYVFTAGDLL) traverse the membrane as a helical segment. Topologically, residues 297 to 360 (PRAGPRFLTR…GKTEKDSQEW (64 aa)) are cytoplasmic. The disordered stretch occupies residues 311–360 (SGEARGGSRSREGTMELRTTPKLKVMGQGRGNGDPGGGDGGKTEKDSQEW). The span at 338 to 350 (QGRGNGDPGGGDG) shows a compositional bias: gly residues. The span at 351–360 (GKTEKDSQEW) shows a compositional bias: basic and acidic residues.

This sequence belongs to the G-protein coupled receptor 1 family.

The protein resides in the cell membrane. Functionally, low-affinity receptor for leukotrienes including leukotriene B4. Mediates chemotaxis of granulocytes and macrophages. The response is mediated via G-proteins that activate a phosphatidylinositol-calcium second messenger system. The protein is Leukotriene B4 receptor 2 (Ltb4r2) of Mus musculus (Mouse).